We begin with the raw amino-acid sequence, 131 residues long: Small ribosomal subunit protein uS8 (131 aa).

The protein belongs to the universal ribosomal protein uS8 family. In terms of assembly, part of the 30S ribosomal subunit. Contacts proteins S5 and S12.

One of the primary rRNA binding proteins, it binds directly to 16S rRNA central domain where it helps coordinate assembly of the platform of the 30S subunit. This chain is Small ribosomal subunit protein uS8, found in Phocaeicola vulgatus (strain ATCC 8482 / DSM 1447 / JCM 5826 / CCUG 4940 / NBRC 14291 / NCTC 11154) (Bacteroides vulgatus).